Consider the following 117-residue polypeptide: Ig heavy chain V region J558 (117 aa).

The Ig-like domain occupies 1 to 116 (EVQLQQSGPE…WGAGTTVTVS (116 aa)). A disulfide bond links Cys22 and Cys96.

This is Ig heavy chain V region J558 from Mus musculus (Mouse).